The chain runs to 294 residues: Nucleotide-binding protein CA_C0511 (294 aa).

Residue Gly8–Thr15 coordinates ATP. Position 59-62 (Asp59–Gly62) interacts with GTP.

It belongs to the RapZ-like family.

Functionally, displays ATPase and GTPase activities. This Clostridium acetobutylicum (strain ATCC 824 / DSM 792 / JCM 1419 / IAM 19013 / LMG 5710 / NBRC 13948 / NRRL B-527 / VKM B-1787 / 2291 / W) protein is Nucleotide-binding protein CA_C0511.